The following is a 194-amino-acid chain: Probable nicotinate-nucleotide adenylyltransferase (194 aa).

The protein belongs to the NadD family.

It carries out the reaction nicotinate beta-D-ribonucleotide + ATP + H(+) = deamido-NAD(+) + diphosphate. It participates in cofactor biosynthesis; NAD(+) biosynthesis; deamido-NAD(+) from nicotinate D-ribonucleotide: step 1/1. Catalyzes the reversible adenylation of nicotinate mononucleotide (NaMN) to nicotinic acid adenine dinucleotide (NaAD). The polypeptide is Probable nicotinate-nucleotide adenylyltransferase (Brucella abortus (strain 2308)).